The primary structure comprises 223 residues: Thymine-DNA glycosylase (223 aa).

Positions 201, 208, 211, and 217 each coordinate [4Fe-4S] cluster.

It belongs to the Nth/MutY family. [4Fe-4S] cluster serves as cofactor.

The enzyme catalyses Hydrolyzes mismatched double-stranded DNA and polynucleotides, releasing free thymine.. Thymine cleavage is completely inhibited by Ni(2+), Co(2+), Zn(2+), Cu(2+) and Mn(2+). Activity is not affected by Mg(2+) and Ca(2+). Its function is as follows. DNA glycosylase that excises thymine from T/G mismatches. Also has a weak DNA glycosylase activity on uracil paired with various bases. The polypeptide is Thymine-DNA glycosylase (Aeropyrum pernix (strain ATCC 700893 / DSM 11879 / JCM 9820 / NBRC 100138 / K1)).